The primary structure comprises 283 residues: Thymidylate synthase (283 aa).

R21 serves as a coordination point for dUMP. H51 contacts (6R)-5,10-methylene-5,6,7,8-tetrahydrofolate. A dUMP-binding site is contributed by 123 to 124; that stretch reads RR. C156 acts as the Nucleophile in catalysis. Residues 185–188, N196, and 226–228 contribute to the dUMP site; these read RSAD and HIY. (6R)-5,10-methylene-5,6,7,8-tetrahydrofolate is bound at residue D188. A282 contacts (6R)-5,10-methylene-5,6,7,8-tetrahydrofolate.

The protein belongs to the thymidylate synthase family. Bacterial-type ThyA subfamily. Homodimer.

It localises to the cytoplasm. It carries out the reaction dUMP + (6R)-5,10-methylene-5,6,7,8-tetrahydrofolate = 7,8-dihydrofolate + dTMP. It functions in the pathway pyrimidine metabolism; dTTP biosynthesis. In terms of biological role, catalyzes the reductive methylation of 2'-deoxyuridine-5'-monophosphate (dUMP) to 2'-deoxythymidine-5'-monophosphate (dTMP) while utilizing 5,10-methylenetetrahydrofolate (mTHF) as the methyl donor and reductant in the reaction, yielding dihydrofolate (DHF) as a by-product. This enzymatic reaction provides an intracellular de novo source of dTMP, an essential precursor for DNA biosynthesis. The polypeptide is Thymidylate synthase (Flavobacterium johnsoniae (strain ATCC 17061 / DSM 2064 / JCM 8514 / BCRC 14874 / CCUG 350202 / NBRC 14942 / NCIMB 11054 / UW101) (Cytophaga johnsonae)).